A 215-amino-acid chain; its full sequence is Ribose-5-phosphate isomerase A (215 aa).

Substrate contacts are provided by residues 26-29 (TGST), 79-82 (DGAD), and 92-95 (KGGG). E101 acts as the Proton acceptor in catalysis. K119 is a substrate binding site.

The protein belongs to the ribose 5-phosphate isomerase family. In terms of assembly, homodimer.

The catalysed reaction is aldehydo-D-ribose 5-phosphate = D-ribulose 5-phosphate. It participates in carbohydrate degradation; pentose phosphate pathway; D-ribose 5-phosphate from D-ribulose 5-phosphate (non-oxidative stage): step 1/1. Its function is as follows. Catalyzes the reversible conversion of ribose-5-phosphate to ribulose 5-phosphate. This Xylella fastidiosa (strain M12) protein is Ribose-5-phosphate isomerase A.